Reading from the N-terminus, the 122-residue chain is Large ribosomal subunit protein uL14 (122 aa).

This sequence belongs to the universal ribosomal protein uL14 family. As to quaternary structure, part of the 50S ribosomal subunit. Forms a cluster with proteins L3 and L19. In the 70S ribosome, L14 and L19 interact and together make contacts with the 16S rRNA in bridges B5 and B8.

Its function is as follows. Binds to 23S rRNA. Forms part of two intersubunit bridges in the 70S ribosome. The chain is Large ribosomal subunit protein uL14 from Acidiphilium cryptum (strain JF-5).